The following is a 246-amino-acid chain: ATP synthase subunit a (246 aa).

Residues 1-3 constitute a propeptide, removed in mature form; the sequence is MFY. 7 helical membrane-spanning segments follow: residues 21 to 41, 56 to 76, 82 to 102, 113 to 133, 138 to 158, 184 to 204, and 206 to 226; these read LTFSITNYTLYLIIVSLIIIF, WGVSVIAIYDTILNLVNGQIG, YFPLIFTIFNFILIANLISMI, VAVVSFSLTLWIGNVVLGLYL, FFALFVPSGTPLALVPVLVLI, LMLILGSLIISLMSSSFLGFV, and GIIPILAVVAITILEFGIAII.

It belongs to the ATPase A chain family. In terms of assembly, F-type ATPases have 2 components, CF(1) - the catalytic core - and CF(0) - the membrane proton channel. CF(1) has five subunits: alpha(3), beta(3), gamma(1), delta(1), epsilon(1). CF(0) has three main subunits: a, b and c.

The protein resides in the mitochondrion inner membrane. Its function is as follows. Mitochondrial membrane ATP synthase (F(1)F(0) ATP synthase or Complex V) produces ATP from ADP in the presence of a proton gradient across the membrane which is generated by electron transport complexes of the respiratory chain. F-type ATPases consist of two structural domains, F(1) - containing the extramembraneous catalytic core and F(0) - containing the membrane proton channel, linked together by a central stalk and a peripheral stalk. During catalysis, ATP synthesis in the catalytic domain of F(1) is coupled via a rotary mechanism of the central stalk subunits to proton translocation. Key component of the proton channel; it may play a direct role in the translocation of protons across the membrane. The chain is ATP synthase subunit a (ATP6) from Candida parapsilosis (Yeast).